Reading from the N-terminus, the 339-residue chain is Dihydroorotate dehydrogenase (quinone) (339 aa).

Residues 61–65 (AGLDK) and threonine 85 each bind FMN. Lysine 65 contributes to the substrate binding site. Residue 110 to 114 (NRMGF) participates in substrate binding. 2 residues coordinate FMN: asparagine 138 and asparagine 171. Asparagine 171 is a binding site for substrate. Serine 174 acts as the Nucleophile in catalysis. Asparagine 176 is a binding site for substrate. The FMN site is built by lysine 216 and threonine 244. 245–246 (NT) is a substrate binding site. FMN contacts are provided by residues glycine 267, glycine 296, and 317 to 318 (YS).

Belongs to the dihydroorotate dehydrogenase family. Type 2 subfamily. Monomer. The cofactor is FMN.

Its subcellular location is the cell membrane. The enzyme catalyses (S)-dihydroorotate + a quinone = orotate + a quinol. The protein operates within pyrimidine metabolism; UMP biosynthesis via de novo pathway; orotate from (S)-dihydroorotate (quinone route): step 1/1. Its function is as follows. Catalyzes the conversion of dihydroorotate to orotate with quinone as electron acceptor. The protein is Dihydroorotate dehydrogenase (quinone) of Teredinibacter turnerae (strain ATCC 39867 / T7901).